Here is a 340-residue protein sequence, read N- to C-terminus: Ketol-acid reductoisomerase (NADP(+)) (340 aa).

One can recognise a KARI N-terminal Rossmann domain in the interval 1-183 (MAVTVYYDKD…GAGRTGIIET (183 aa)). NADP(+)-binding positions include 26-29 (FGSQ), Lys49, Ser54, and 84-87 (DELQ). The active site involves His109. Gly135 is a binding site for NADP(+). Positions 184–329 (TFKDETETDL…EKLRAMMPWI (146 aa)) constitute a KARI C-terminal knotted domain. Residues Asp192, Glu196, Glu228, and Glu232 each contribute to the Mg(2+) site. Ser253 is a binding site for substrate.

Belongs to the ketol-acid reductoisomerase family. The cofactor is Mg(2+).

It catalyses the reaction (2R)-2,3-dihydroxy-3-methylbutanoate + NADP(+) = (2S)-2-acetolactate + NADPH + H(+). The catalysed reaction is (2R,3R)-2,3-dihydroxy-3-methylpentanoate + NADP(+) = (S)-2-ethyl-2-hydroxy-3-oxobutanoate + NADPH + H(+). It functions in the pathway amino-acid biosynthesis; L-isoleucine biosynthesis; L-isoleucine from 2-oxobutanoate: step 2/4. The protein operates within amino-acid biosynthesis; L-valine biosynthesis; L-valine from pyruvate: step 2/4. Its function is as follows. Involved in the biosynthesis of branched-chain amino acids (BCAA). Catalyzes an alkyl-migration followed by a ketol-acid reduction of (S)-2-acetolactate (S2AL) to yield (R)-2,3-dihydroxy-isovalerate. In the isomerase reaction, S2AL is rearranged via a Mg-dependent methyl migration to produce 3-hydroxy-3-methyl-2-ketobutyrate (HMKB). In the reductase reaction, this 2-ketoacid undergoes a metal-dependent reduction by NADPH to yield (R)-2,3-dihydroxy-isovalerate. The protein is Ketol-acid reductoisomerase (NADP(+)) of Campylobacter hominis (strain ATCC BAA-381 / DSM 21671 / CCUG 45161 / LMG 19568 / NCTC 13146 / CH001A).